The chain runs to 473 residues: ATP synthase subunit beta, chloroplastic (473 aa).

G172–T179 serves as a coordination point for ATP.

The protein belongs to the ATPase alpha/beta chains family. In terms of assembly, F-type ATPases have 2 components, CF(1) - the catalytic core - and CF(0) - the membrane proton channel. CF(1) has five subunits: alpha(3), beta(3), gamma(1), delta(1), epsilon(1). CF(0) has four main subunits: a(1), b(1), b'(1) and c(9-12).

Its subcellular location is the plastid. The protein resides in the chloroplast thylakoid membrane. It carries out the reaction ATP + H2O + 4 H(+)(in) = ADP + phosphate + 5 H(+)(out). Produces ATP from ADP in the presence of a proton gradient across the membrane. The catalytic sites are hosted primarily by the beta subunits. This is ATP synthase subunit beta, chloroplastic from Equisetum arvense (Field horsetail).